The primary structure comprises 60 residues: Large ribosomal subunit protein uL30 (60 aa).

It belongs to the universal ribosomal protein uL30 family. As to quaternary structure, part of the 50S ribosomal subunit.

This chain is Large ribosomal subunit protein uL30, found in Salinispora arenicola (strain CNS-205).